A 326-amino-acid polypeptide reads, in one-letter code: Ribose-phosphate pyrophosphokinase (326 aa).

Residues 45–47 (NGE) and 104–105 (RQ) contribute to the ATP site. Mg(2+) is bound by residues His138 and Asp178. Lys202 is a catalytic residue. D-ribose 5-phosphate contacts are provided by residues Arg204, Asp230, and 234–238 (DTGGT).

It belongs to the ribose-phosphate pyrophosphokinase family. Class I subfamily. In terms of assembly, homohexamer. Mg(2+) serves as cofactor.

It is found in the cytoplasm. It carries out the reaction D-ribose 5-phosphate + ATP = 5-phospho-alpha-D-ribose 1-diphosphate + AMP + H(+). The protein operates within metabolic intermediate biosynthesis; 5-phospho-alpha-D-ribose 1-diphosphate biosynthesis; 5-phospho-alpha-D-ribose 1-diphosphate from D-ribose 5-phosphate (route I): step 1/1. Functionally, involved in the biosynthesis of the central metabolite phospho-alpha-D-ribosyl-1-pyrophosphate (PRPP) via the transfer of pyrophosphoryl group from ATP to 1-hydroxyl of ribose-5-phosphate (Rib-5-P). The chain is Ribose-phosphate pyrophosphokinase from Mycobacterium bovis (strain ATCC BAA-935 / AF2122/97).